The primary structure comprises 640 residues: Chaperone protein DnaK (640 aa).

Threonine 199 carries the phosphothreonine; by autocatalysis modification. Residues 603–640 are disordered; it reads YAAGETESSAAEPGEPQEKTVDAEVVDAEFEEVKDDKK. Residues 626 to 640 show a composition bias toward acidic residues; it reads EVVDAEFEEVKDDKK.

This sequence belongs to the heat shock protein 70 family.

Its function is as follows. Acts as a chaperone. This chain is Chaperone protein DnaK, found in Methylobacillus flagellatus (strain ATCC 51484 / DSM 6875 / VKM B-1610 / KT).